The following is a 627-amino-acid chain: BURP domain-containing protein 12 (627 aa).

Residues 1–25 (MASPPHLPLLLLLLVVVCNAAGGDG) form the signal peptide. Residues Asn119, Asn175, Asn251, Asn366, Asn384, and Asn530 are each glycosylated (N-linked (GlcNAc...) asparagine). The BURP domain maps to 415 to 626 (FFRETELVSG…FEGDMTWTVA (212 aa)).

Expressed in stems, leaves, shoot and panicles.

This Oryza sativa subsp. japonica (Rice) protein is BURP domain-containing protein 12 (BURP12).